The chain runs to 463 residues: Heterogeneous nuclear ribonucleoprotein K (463 aa).

At M1 the chain carries N-acetylmethionine. The segment at 1–37 is disordered; sequence METEQPEETFPNTETNGEFGKRPAEDMEEEQAFKRSR. The interval 1–276 is necessary for interaction with DDX1; that stretch reads METEQPEETF…GRGGRPMPPS (276 aa). Residues 19–37 show a composition bias toward basic and acidic residues; sequence FGKRPAEDMEEEQAFKRSR. At K34 the chain carries N6-acetyllysine; alternate. K34 is covalently cross-linked (Glycyl lysine isopeptide (Lys-Gly) (interchain with G-Cter in SUMO1); alternate). K34 is covalently cross-linked (Glycyl lysine isopeptide (Lys-Gly) (interchain with G-Cter in SUMO2); alternate). The interval 35 to 197 is interaction with ASFV p30; it reads RSRNTDEMVE…STDRVVLIGG (163 aa). At S36 the chain carries Phosphoserine. Residue T39 is modified to Phosphothreonine. In terms of domain architecture, KH 1 spans 42-104; it reads MVELRILLQS…ETIGEILKKI (63 aa). Glycyl lysine isopeptide (Lys-Gly) (interchain with G-Cter in SUMO2) cross-links involve residues K52 and K60. A run of 2 repeats spans residues 54-76 and 59-62. A 2 X 22 AA approximate repeats region spans residues 54 to 421; the sequence is AGAVIGKGGK…QIRHESGASI (368 aa). The segment at 59–407 is 5 X 4 AA repeats of G-X-G-G; it reads GKGGKNIKAL…LAGSIIGKGG (349 aa). Residues S75 and S116 each carry the phosphoserine modification. A KH 2 domain is found at 144 to 209; the sequence is DCELRLLIHQ…DRVVECIKII (66 aa). K163 is covalently cross-linked (Glycyl lysine isopeptide (Lys-Gly) (interchain with G-Cter in SUMO1); alternate). K163 is covalently cross-linked (Glycyl lysine isopeptide (Lys-Gly) (interchain with G-Cter in SUMO2); alternate). Position 198 is an N6-acetyllysine (K198). The interaction with ZIK1 stretch occupies residues 209 to 337; it reads ILDLISESPI…RPGDRYDGMV (129 aa). 2 positions are modified to phosphoserine: S214 and S216. A Glycyl lysine isopeptide (Lys-Gly) (interchain with G-Cter in SUMO2); alternate cross-link involves residue K219. Position 219 is an N6-succinyllysine; alternate (K219). Residues 236–273 form an RNA-binding RGG-box region; it reads YGGFTMMFDDRRGRPVGFPMRGRGGFDRMPPGRGGRPM. 3 consecutive repeat copies span residues 245-250, 257-260, and 267-270. Residues 245–329 form a 2 X 6 AA approximate repeats region; that stretch reads DRRGRPVGFP…LMAYDRRGRP (85 aa). The tract at residues 250 to 329 is disordered; that stretch reads PVGFPMRGRG…LMAYDRRGRP (80 aa). A compositionally biased stretch (low complexity) spans 252–266; the sequence is GFPMRGRGGFDRMPP. Residues 276–285 show a composition bias toward basic and acidic residues; that stretch reads SRRDYDDMSP. S284 bears the Phosphoserine mark. A 3-4 repeat occupies 295–298; that stretch reads GRGG. R316 carries the post-translational modification Omega-N-methylarginine. The stretch at 324–329 is one 2-2 repeat; sequence DRRGRP. At R377 the chain carries Omega-N-methylarginine. Position 379 is a phosphoserine (S379). Y380 carries the phosphotyrosine modification. A KH 3 domain is found at 387–451; that stretch reads IITTQVTIPK…DQIQNAQYLL (65 aa). A run of 2 repeats spans residues 399–421 and 404–407. K405 carries the N6-acetyllysine; alternate modification. K405 participates in a covalent cross-link: Glycyl lysine isopeptide (Lys-Gly) (interchain with G-Cter in SUMO2); alternate. A Phosphoserine modification is found at S420. K422 participates in a covalent cross-link: Glycyl lysine isopeptide (Lys-Gly) (interchain with G-Cter in SUMO1); alternate. Residue K422 forms a Glycyl lysine isopeptide (Lys-Gly) (interchain with G-Cter in SUMO2); alternate linkage. Residue K422 forms a Glycyl lysine isopeptide (Lys-Gly) (interchain with G-Cter in SUMO); alternate linkage.

Identified in the spliceosome C complex. Part of a transcription inhibitory ribonucleoprotein complex composed at least of the circular RNA circZNF827, ZNF827 and HNRNPL. Interacts with RBM42 and ZIK1. Interacts with BRDT. Interacts with ANKRD28. Interacts with ASFV p30 protein. Interacts with DDX1. Interacts with MDM2; this interaction leads to ubiquitination and proteasomal degradation. Interacts with p53/TP53. Interacts with IVNS1ABP (via BACK domain); the interaction is direct. Interacts with PPIA/CYPA. As to quaternary structure, (Microbial infection) Interacts with HCV core protein. In terms of processing, arg-296 and Arg-299 are dimethylated, probably to asymmetric dimethylarginine. Sumoylated by CBX4. Sumoylation is increased upon DNA damage, such as that produced by doxorubicin, etoposide, UV light and camptothecin, due to enhanced CBX4 phosphorylation by HIPK2 under these conditions. Post-translationally, ubiquitinated by MDM2. Doxorubicin treatment does not affect monoubiquitination, but slightly decreases HNRNPK poly-ubiquitination. In terms of processing, O-glycosylated (O-GlcNAcylated), in a cell cycle-dependent manner.

The protein localises to the cytoplasm. It is found in the nucleus. Its subcellular location is the nucleoplasm. The protein resides in the cell projection. It localises to the podosome. In terms of biological role, one of the major pre-mRNA-binding proteins. Binds tenaciously to poly(C) sequences. Likely to play a role in the nuclear metabolism of hnRNAs, particularly for pre-mRNAs that contain cytidine-rich sequences. Can also bind poly(C) single-stranded DNA. Plays an important role in p53/TP53 response to DNA damage, acting at the level of both transcription activation and repression. When sumoylated, acts as a transcriptional coactivator of p53/TP53, playing a role in p21/CDKN1A and 14-3-3 sigma/SFN induction. As far as transcription repression is concerned, acts by interacting with long intergenic RNA p21 (lincRNA-p21), a non-coding RNA induced by p53/TP53. This interaction is necessary for the induction of apoptosis, but not cell cycle arrest. As part of a ribonucleoprotein complex composed at least of ZNF827, HNRNPL and the circular RNA circZNF827 that nucleates the complex on chromatin, may negatively regulate the transcription of genes involved in neuronal differentiation. The chain is Heterogeneous nuclear ribonucleoprotein K (HNRNPK) from Homo sapiens (Human).